A 436-amino-acid chain; its full sequence is tRNA(Ile)-lysidine synthase (436 aa).

Residue 25–30 (SGGLDS) coordinates ATP.

It belongs to the tRNA(Ile)-lysidine synthase family.

It is found in the cytoplasm. The enzyme catalyses cytidine(34) in tRNA(Ile2) + L-lysine + ATP = lysidine(34) in tRNA(Ile2) + AMP + diphosphate + H(+). Its function is as follows. Ligates lysine onto the cytidine present at position 34 of the AUA codon-specific tRNA(Ile) that contains the anticodon CAU, in an ATP-dependent manner. Cytidine is converted to lysidine, thus changing the amino acid specificity of the tRNA from methionine to isoleucine. The sequence is that of tRNA(Ile)-lysidine synthase from Serratia proteamaculans (strain 568).